The following is a 308-amino-acid chain: Oligopeptide transport ATP-binding protein OppF (308 aa).

The region spanning 9–254 is the ABC transporter domain; it reads VEVKNVSLTF…PIHPYTQSLL (246 aa). Residue 46–53 participates in ATP binding; sequence GESGSGKT.

It belongs to the ABC transporter superfamily. As to quaternary structure, the complex is composed of two ATP-binding proteins (OppD and OppF), two transmembrane proteins (OppB and OppC) and a solute-binding protein (OppA).

It localises to the cell membrane. It catalyses the reaction a [peptide](out) + ATP + H2O = a [peptide](in) + ADP + phosphate + H(+). Its function is as follows. Part of the ABC transporter complex OppABCDF involved in the uptake of oligopeptides. Probably responsible for energy coupling to the transport system. The protein is Oligopeptide transport ATP-binding protein OppF (oppF) of Streptococcus mutans serotype c (strain ATCC 700610 / UA159).